A 287-amino-acid chain; its full sequence is Isopentenyl-diphosphate Delta-isomerase I (287 aa).

The region spanning 105 to 257 is the Nudix hydrolase domain; the sequence is LLHRAFSVFL…GVKLSPWFRL (153 aa). Active-site residues include cysteine 142 and tyrosine 207.

This sequence belongs to the IPP isomerase type 1 family.

It catalyses the reaction isopentenyl diphosphate = dimethylallyl diphosphate. It participates in isoprenoid biosynthesis; dimethylallyl diphosphate biosynthesis; dimethylallyl diphosphate from isopentenyl diphosphate: step 1/1. The protein operates within porphyrin-containing compound metabolism; chlorophyll biosynthesis. In terms of biological role, catalyzes the 1,3-allylic rearrangement of the homoallylic substrate isopentenyl (IPP) to its highly electrophilic allylic isomer, dimethylallyl diphosphate (DMAPP). This is Isopentenyl-diphosphate Delta-isomerase I (IPI1) from Clarkia breweri (Fairy fans).